The primary structure comprises 116 residues: Ribosome-binding factor A (116 aa).

This sequence belongs to the RbfA family. In terms of assembly, monomer. Binds 30S ribosomal subunits, but not 50S ribosomal subunits or 70S ribosomes.

The protein resides in the cytoplasm. Its function is as follows. One of several proteins that assist in the late maturation steps of the functional core of the 30S ribosomal subunit. Associates with free 30S ribosomal subunits (but not with 30S subunits that are part of 70S ribosomes or polysomes). Required for efficient processing of 16S rRNA. May interact with the 5'-terminal helix region of 16S rRNA. In Streptococcus pneumoniae (strain ATCC 700669 / Spain 23F-1), this protein is Ribosome-binding factor A.